A 196-amino-acid polypeptide reads, in one-letter code: ATP-dependent Clp protease proteolytic subunit (196 aa).

S98 serves as the catalytic Nucleophile. H123 is a catalytic residue.

It belongs to the peptidase S14 family. In terms of assembly, fourteen ClpP subunits assemble into 2 heptameric rings which stack back to back to give a disk-like structure with a central cavity, resembling the structure of eukaryotic proteasomes.

It localises to the cytoplasm. The catalysed reaction is Hydrolysis of proteins to small peptides in the presence of ATP and magnesium. alpha-casein is the usual test substrate. In the absence of ATP, only oligopeptides shorter than five residues are hydrolyzed (such as succinyl-Leu-Tyr-|-NHMec, and Leu-Tyr-Leu-|-Tyr-Trp, in which cleavage of the -Tyr-|-Leu- and -Tyr-|-Trp bonds also occurs).. In terms of biological role, cleaves peptides in various proteins in a process that requires ATP hydrolysis. Has a chymotrypsin-like activity. Plays a major role in the degradation of misfolded proteins. The chain is ATP-dependent Clp protease proteolytic subunit from Sulfurimonas denitrificans (strain ATCC 33889 / DSM 1251) (Thiomicrospira denitrificans (strain ATCC 33889 / DSM 1251)).